The chain runs to 291 residues: Phosphate-binding protein PstS 2 (291 aa).

A signal peptide spans 1–21 (MKFKKMLTLAAIGLSGFGLVA). Residue C22 is the site of N-palmitoyl cysteine attachment. The S-diacylglycerol cysteine moiety is linked to residue C22.

This sequence belongs to the PstS family. In terms of assembly, the complex is composed of two ATP-binding proteins (PstB), two transmembrane proteins (PstC and PstA) and a solute-binding protein (PstS).

The protein resides in the cell membrane. Part of the ABC transporter complex PstSACB involved in phosphate import. This chain is Phosphate-binding protein PstS 2 (pstS2), found in Streptococcus pneumoniae serotype 4 (strain ATCC BAA-334 / TIGR4).